A 466-amino-acid polypeptide reads, in one-letter code: Argininosuccinate lyase (466 aa).

Residues serine 27, asparagine 114, and threonine 159 each contribute to the 2-(N(omega)-L-arginino)succinate site. Histidine 160 acts as the Proton acceptor in catalysis. The Proton donor role is filled by serine 281. Asparagine 289, tyrosine 321, glutamine 326, and lysine 329 together coordinate 2-(N(omega)-L-arginino)succinate.

The protein belongs to the lyase 1 family. Argininosuccinate lyase subfamily. As to quaternary structure, homotetramer. In terms of tissue distribution, eye lens.

The catalysed reaction is 2-(N(omega)-L-arginino)succinate = fumarate + L-arginine. It participates in amino-acid biosynthesis; L-arginine biosynthesis; L-arginine from L-ornithine and carbamoyl phosphate: step 3/3. In terms of biological role, delta crystallin, the principal crystallin in embryonic lens, is found only in birds and reptiles. This protein may also function as an enzymatically active argininosuccinate lyase. This Gallus gallus (Chicken) protein is Argininosuccinate lyase (ASL2).